A 692-amino-acid chain; its full sequence is Glycine--tRNA ligase beta subunit (692 aa).

This sequence belongs to the class-II aminoacyl-tRNA synthetase family. In terms of assembly, tetramer of two alpha and two beta subunits.

Its subcellular location is the cytoplasm. The enzyme catalyses tRNA(Gly) + glycine + ATP = glycyl-tRNA(Gly) + AMP + diphosphate. The chain is Glycine--tRNA ligase beta subunit from Hahella chejuensis (strain KCTC 2396).